The sequence spans 231 residues: Aquaporin Z (231 aa).

2 consecutive transmembrane segments (helical) span residues 9–29 (CFGT…AAGF) and 34–54 (IGFA…AFAV). Positions 63–65 (NPA) match the NPA 1 motif. A run of 3 helical transmembrane segments spans residues 82–102 (VGYV…LYLI), 129–149 (YSML…LLVI), and 156–176 (FAPA…IHLI). Residues 186 to 188 (NPA) carry the NPA 2 motif. Residues 202-222 (LEQLWFFWVVPIVGGIIGGLI) traverse the membrane as a helical segment.

It belongs to the MIP/aquaporin (TC 1.A.8) family. In terms of assembly, homotetramer.

The protein localises to the cell inner membrane. It catalyses the reaction H2O(in) = H2O(out). Functionally, channel that permits osmotically driven movement of water in both directions. It is involved in the osmoregulation and in the maintenance of cell turgor during volume expansion in rapidly growing cells. It mediates rapid entry or exit of water in response to abrupt changes in osmolarity. This is Aquaporin Z from Escherichia coli O157:H7.